The sequence spans 349 residues: MEKQHLKSQIAALRVPTFNIAWPERRSPKADVVEERMMKWADHHKLLVNGEYRDRVIRTRYGLLAARCYPNAGEELLQAIADYFVWFFLADDLFVDRVEVVTDETIRNLTAMIDVLDRNVAREEPVFGELAWLDVCQRLRDLLQPEAFQRFAQGMRLWATTAALQILNHQRPKSVGIREYEAIRRHTSGLNPCTSLADAANKGSVQAHEFYQPDVQKLVLQTNNIVCWANDIQSLGMEIQQPGQFRNMVTIYIQQGQSLSEAVSTTTARVNNELSDFCKLADIVTAPSISDELRVYVDGLKYWIRGYMDWVVHDTERYADKFIASDADDRCVSTLNPSLLNRSSSSATE.

Positions 91 and 96 each coordinate Mg(2+). The short motif at 91 to 96 (DDLFVD) is the DDXXXD motif element. Arg-184 lines the substrate pocket. Residues Asn-230, Ser-234, and Glu-238 each contribute to the Mg(2+) site.

Belongs to the terpene synthase family. Mg(2+) serves as cofactor.

The enzyme catalyses (2E,6E)-farnesyl diphosphate + H2O = (+)-corvol ether B + diphosphate. The catalysed reaction is (2E,6E)-farnesyl diphosphate + H2O = (+)-corvol ether A + diphosphate. Terpene synthase that catalyzes the conversion of (2E,6E)-farnesyl diphosphate (FPP) into sesquiterpenes which are important for fungi-environment interactions. Produces a mixture consisting of 8 sesquiterpenes including corvol ethers A and B, as well as traces of epizonarene, gamma-cadinene, delta-cadinene, alpha-cadinene, alpha-cadinol, and an unidentified sesquiterpene. Produces both corvol ether A and corvol ether B in similar concentrations. The polypeptide is Sesquiterpene synthase MAC_05714 (Metarhizium acridum (strain CQMa 102)).